The primary structure comprises 181 residues: ADP-ribosylation factor 1 (181 aa).

An N-acetylglycine; alternate modification is found at G2. G2 carries the N-myristoyl glycine; alternate lipid modification. Residues 3-16 (NIFANLFKGLFGKK) form an important for the stable binding to the membranes region. GTP-binding positions include 24–32 (GLDAAGKTT), 126–129 (NKQD), and A160.

It belongs to the small GTPase superfamily. Arf family. Interacts (when activated) with GGA1, GGA2 and GGA3; the interaction is required for proper subcellular location of GGA1, GGA2 and GGA3. Interacts with ARHGAP21, ASAP2, GGA1, HERC1, PRKCABP, PIP5K1B, TMED2, PSCD2, TMED10 and GRIA2. Interacts with ARFGAP1, which hydrolyzes GTP and thus, regulates its function. Interacts with PI4KB in the Golgi complex. Interacts with NCS1/FREQ in the Golgi and at the plasma membrane. Interacts with PLEKHA3. Interacts with PLEKHA8; the interaction, together with phosphatidylinositol 4-phosphate binding, is required for FAPP2-mediated glucosylceramide transfer activity. Interacts (activated) with PICK1 (via PDZ domain); the interaction blocks Arp2/3 complex inhibition. Interacts with IQSEC1. Interacts with C9orf72.

It is found in the golgi apparatus membrane. The protein localises to the synapse. It localises to the synaptosome. Its subcellular location is the postsynaptic density. The catalysed reaction is GTP + H2O = GDP + phosphate + H(+). With respect to regulation, alternates between an inactive GDP-bound form and an active GTP-bound form. Activated by guanine nucleotide-exchange factors (GEFs) and inactivated by GTPase-activating proteins (GAPs). Small GTPase involved in protein trafficking between different compartments. Modulates vesicle budding and uncoating within the Golgi complex. In its GTP-bound form, triggers the recruitment of coatomer proteins to the Golgi membrane. The hydrolysis of ARF1-bound GTP, which is mediated by ARFGAPs proteins, is required for dissociation of coat proteins from Golgi membranes and vesicles. The GTP-bound form interacts with PICK1 to limit PICK1-mediated inhibition of Arp2/3 complex activity; the function is linked to AMPA receptor (AMPAR) trafficking, regulation of synaptic plasticity of excitatory synapses and spine shrinkage during long-term depression (LTD). Plays a key role in the regulation of intestinal stem cells and gut microbiota, and is essential for maintaining intestinal homeostasis. Also plays a critical role in mast cell expansion but not in mast cell maturation by facilitating optimal mTORC1 activation. This Bos taurus (Bovine) protein is ADP-ribosylation factor 1 (ARF1).